Consider the following 466-residue polypeptide: RUS family member 1 (466 aa).

The residue at position 2 (Ala2) is an N-acetylalanine. A helical membrane pass occupies residues 245–265; sequence LLMLPLVSDCPSLSLGCFVLL.

This sequence belongs to the RUS1 family.

It localises to the membrane. This is RUS family member 1 from Mus musculus (Mouse).